The chain runs to 88 residues: Acylphosphatase (88 aa).

The Acylphosphatase-like domain occupies 3 to 88; the sequence is AVDVLISGRV…RAGHQGFEVR (86 aa). Catalysis depends on residues arginine 18 and asparagine 36.

It belongs to the acylphosphatase family.

The enzyme catalyses an acyl phosphate + H2O = a carboxylate + phosphate + H(+). In Methanocella arvoryzae (strain DSM 22066 / NBRC 105507 / MRE50), this protein is Acylphosphatase (acyP).